We begin with the raw amino-acid sequence, 430 residues long: 3-phosphoshikimate 1-carboxyvinyltransferase (430 aa).

3 residues coordinate 3-phosphoshikimate: Lys-33, Ser-34, and Arg-38. Lys-33 serves as a coordination point for phosphoenolpyruvate. Phosphoenolpyruvate is bound by residues Gly-101 and Arg-129. Ser-172, Ser-173, Gln-174, Ser-201, Glu-319, and His-346 together coordinate 3-phosphoshikimate. Gln-174 lines the phosphoenolpyruvate pocket. Glu-319 acts as the Proton acceptor in catalysis. Residues Arg-350, Arg-391, and Lys-416 each coordinate phosphoenolpyruvate.

The protein belongs to the EPSP synthase family. In terms of assembly, monomer.

It is found in the cytoplasm. The enzyme catalyses 3-phosphoshikimate + phosphoenolpyruvate = 5-O-(1-carboxyvinyl)-3-phosphoshikimate + phosphate. It functions in the pathway metabolic intermediate biosynthesis; chorismate biosynthesis; chorismate from D-erythrose 4-phosphate and phosphoenolpyruvate: step 6/7. Catalyzes the transfer of the enolpyruvyl moiety of phosphoenolpyruvate (PEP) to the 5-hydroxyl of shikimate-3-phosphate (S3P) to produce enolpyruvyl shikimate-3-phosphate and inorganic phosphate. The protein is 3-phosphoshikimate 1-carboxyvinyltransferase of Corynebacterium glutamicum (strain ATCC 13032 / DSM 20300 / JCM 1318 / BCRC 11384 / CCUG 27702 / LMG 3730 / NBRC 12168 / NCIMB 10025 / NRRL B-2784 / 534).